We begin with the raw amino-acid sequence, 109 residues long: uncharacterized protein (109 aa).

To M.jannaschii MJ1244 and MJ1245 and M.thermoautotrophicum MTH1110.

This is an uncharacterized protein from Methanococcus maripaludis (Methanococcus deltae).